A 319-amino-acid chain; its full sequence is Large ribosomal subunit protein uL10 (319 aa).

The segment at 286–319 (AGDSGASAAPKEEEKAAEPEEESDEEMGFSLFDD) is disordered. Over residues 304–319 (PEEESDEEMGFSLFDD) the composition is skewed to acidic residues.

The protein belongs to the universal ribosomal protein uL10 family. P0 forms a pentameric complex by interaction with dimers of P1 and P2. In terms of processing, phosphorylated.

Its function is as follows. Ribosomal protein P0 is the functional equivalent of E.coli protein L10. This is Large ribosomal subunit protein uL10 (RP-P0) from Zea mays (Maize).